Consider the following 134-residue polypeptide: Methylglyoxal synthase (134 aa).

In terms of domain architecture, MGS-like spans 1 to 134 (MNIALIAHDN…DWRERVKERG (134 aa)). Substrate contacts are provided by residues histidine 8, lysine 12, 34 to 37 (TGTT), and 54 to 55 (SG). Catalysis depends on aspartate 60, which acts as the Proton donor/acceptor. Residue histidine 87 participates in substrate binding.

It belongs to the methylglyoxal synthase family.

The enzyme catalyses dihydroxyacetone phosphate = methylglyoxal + phosphate. Functionally, catalyzes the formation of methylglyoxal from dihydroxyacetone phosphate. The sequence is that of Methylglyoxal synthase from Alkaliphilus metalliredigens (strain QYMF).